Reading from the N-terminus, the 85-residue chain is MQNDQGEIVDVYIPRKCSATNNILAAKDHASVQINMAEIDPQTGRMTGKQITYALCGELRRMGEADDSVNRLAMKDKMLSEVFGH.

The protein belongs to the eukaryotic ribosomal protein eS21 family. As to quaternary structure, component of the 40S small ribosomal subunit.

It localises to the cytoplasm. Its subcellular location is the cytosol. The protein resides in the rough endoplasmic reticulum. This Pectinaria gouldii (Trumpet worm) protein is Small ribosomal subunit protein eS21 (rps-21).